We begin with the raw amino-acid sequence, 164 residues long: UPF0262 protein Saro_0143 (164 aa).

It belongs to the UPF0262 family.

In Novosphingobium aromaticivorans (strain ATCC 700278 / DSM 12444 / CCUG 56034 / CIP 105152 / NBRC 16084 / F199), this protein is UPF0262 protein Saro_0143.